A 299-amino-acid polypeptide reads, in one-letter code: MKPDAHHVKQFLLRLQDDICQKLSAVDGANFVEDSWRREAGGGGRSRVLRNGGIFEQAGVNFSHVHGDAMPASATAHRPELAGRSFEAMGVSLVVHPHNPYIPTSHANVRFFIAEKPGADPVWWFGGGFDLTPYYGFEEDAVHWHRTARDLCQPFGDDVYPRYKKWCDDYFFLKHRNEQRGIGGLFFDDLNTPDFDHCFDFMQAVGNGYTRAYLPIVERRKAMVWGERERNFQLYRRGRYVEFNLVWDRGTLFGLQTGGRTESILMSMPPLVRWEYDWQPEAGSPEAALSEFIQVRDWI.

Ser-92 is a binding site for substrate. His-96 and His-106 together coordinate a divalent metal cation. Residue His-106 is the Proton donor of the active site. 108-110 contacts substrate; that stretch reads NVR. Residues His-145 and His-175 each coordinate a divalent metal cation. An important for dimerization region spans residues 240-275; the sequence is YVEFNLVWDRGTLFGLQTGGRTESILMSMPPLVRWE. Residue 258–260 participates in substrate binding; sequence GGR.

It belongs to the aerobic coproporphyrinogen-III oxidase family. In terms of assembly, homodimer. A divalent metal cation serves as cofactor.

The protein localises to the cytoplasm. It catalyses the reaction coproporphyrinogen III + O2 + 2 H(+) = protoporphyrinogen IX + 2 CO2 + 2 H2O. It participates in porphyrin-containing compound metabolism; protoporphyrin-IX biosynthesis; protoporphyrinogen-IX from coproporphyrinogen-III (O2 route): step 1/1. Functionally, involved in the heme biosynthesis. Catalyzes the aerobic oxidative decarboxylation of propionate groups of rings A and B of coproporphyrinogen-III to yield the vinyl groups in protoporphyrinogen-IX. The chain is Oxygen-dependent coproporphyrinogen-III oxidase from Salmonella choleraesuis (strain SC-B67).